The sequence spans 527 residues: Catalase (527 aa).

Positions 1–22 (MSDSRDPASDQMKQWKEQRASQ) are enriched in basic and acidic residues. Positions 1 to 34 (MSDSRDPASDQMKQWKEQRASQRPDVLTTGGGNP) are disordered. At serine 2 the chain carries N-acetylserine. Serine 9 carries the post-translational modification Phosphoserine. Lysine 13 carries the N6-succinyllysine modification. Serine 21 is subject to Phosphoserine. Active-site residues include histidine 75 and asparagine 148. Residues histidine 194, serine 201, arginine 203, and asparagine 213 each contribute to the NADP(+) site. An N6-succinyllysine modification is found at lysine 221. Position 233 is an N6-acetyllysine (lysine 233). Residues lysine 237, tryptophan 303, histidine 305, and lysine 306 each contribute to the NADP(+) site. At lysine 306 the chain carries N6-acetyllysine; alternate. At lysine 306 the chain carries N6-succinyllysine; alternate. Residue tyrosine 358 coordinates heme. Phosphoserine occurs at positions 417 and 422. The residue at position 430 (lysine 430) is an N6-acetyllysine; alternate. An N6-succinyllysine; alternate modification is found at lysine 430. Serine 434 bears the Phosphoserine mark. N6-acetyllysine; alternate is present on residues lysine 449 and lysine 480. An N6-succinyllysine; alternate mark is found at lysine 449 and lysine 480. An N6-acetyllysine modification is found at lysine 499. Residue threonine 511 is modified to Phosphothreonine. Position 517 is a phosphoserine (serine 517). Lysine 522 is subject to N6-succinyllysine. The short motif at 524 to 527 (KANL) is the Microbody targeting signal; atypical element.

The protein belongs to the catalase family. Homotetramer. Interacts (via microbody targeting signal) with PEX5, monomeric form interacts with PEX5, leading to its translocation into peroxisomes. Requires heme as cofactor. It depends on NADP(+) as a cofactor.

Its subcellular location is the peroxisome matrix. The enzyme catalyses 2 H2O2 = O2 + 2 H2O. Functionally, catalyzes the degradation of hydrogen peroxide (H(2)O(2)) generated by peroxisomal oxidases to water and oxygen, thereby protecting cells from the toxic effects of hydrogen peroxide. Promotes growth of cells including T-cells, B-cells, myeloid leukemia cells, melanoma cells, mastocytoma cells and normal and transformed fibroblast cells. In Mus musculus (Mouse), this protein is Catalase (Cat).